The chain runs to 400 residues: Acetate kinase (400 aa).

Asn-8 contributes to the Mg(2+) binding site. ATP is bound at residue Lys-15. Position 89 (Arg-89) interacts with substrate. The active-site Proton donor/acceptor is Asp-146. Residues 206 to 210 (HVGNG), 283 to 285 (DMR), and 331 to 335 (GMGEN) each bind ATP. Glu-383 is a Mg(2+) binding site.

This sequence belongs to the acetokinase family. In terms of assembly, homodimer. Mg(2+) is required as a cofactor. Requires Mn(2+) as cofactor.

It is found in the cytoplasm. It carries out the reaction acetate + ATP = acetyl phosphate + ADP. It participates in metabolic intermediate biosynthesis; acetyl-CoA biosynthesis; acetyl-CoA from acetate: step 1/2. Catalyzes the formation of acetyl phosphate from acetate and ATP. Can also catalyze the reverse reaction. In Streptococcus equi subsp. zooepidemicus (strain MGCS10565), this protein is Acetate kinase.